The sequence spans 395 residues: Secreted aspartyl protease 1 (395 aa).

The N-terminal stretch at 1-20 (MQLSIQAIIGFVVAAGLAVA) is a signal peptide. Positions 21 to 88 (SELPSPMTVN…HLLLDLIDKR (68 aa)) are cleaved as a propeptide — removed in mature form. The N-linked (GlcNAc...) asparagine glycan is linked to Asn-41. A Peptidase A1 domain is found at 105–391 (WAGDVQFGQS…DMGKNRMGFA (287 aa)). Residues Asp-121 and Asp-283 contribute to the active site. A disulfide bridge connects residues Cys-321 and Cys-352.

It belongs to the peptidase A1 family.

Its subcellular location is the secreted. Its activity is regulated as follows. Inhibited by pepstatin A. Its function is as follows. Dominant secreted aspartyl protease that has a clear preference for aromatic residues in the P1' position directly adjacent to the cleavage site and, in particular, Trp. In addition, it generally cleaves peptides containing Lys, Arg, Phe, Tyr, or Nle (norleucine) in the P1 position, Nle and Glu at P2, and Arg and Val at P2'. Has important roles in facilitating the interaction of the yeast with the external environment. Is able to rapidly hydrolyze Staphylococcus aureus protein A, an important S.aureus virulence factor involved in immune evasion and biofilm formation. Shows anti-biofilm properties and thus plays a role in inter-kingdom interactions, beneficial for host skin health. The sequence is that of Secreted aspartyl protease 1 from Malassezia globosa (strain ATCC MYA-4612 / CBS 7966) (Dandruff-associated fungus).